Reading from the N-terminus, the 159-residue chain is Ribosomal RNA large subunit methyltransferase H (159 aa).

Residues leucine 76, glycine 108, and 127-132 each bind S-adenosyl-L-methionine; that span reads FSRMTF.

The protein belongs to the RNA methyltransferase RlmH family. As to quaternary structure, homodimer.

It is found in the cytoplasm. The enzyme catalyses pseudouridine(1915) in 23S rRNA + S-adenosyl-L-methionine = N(3)-methylpseudouridine(1915) in 23S rRNA + S-adenosyl-L-homocysteine + H(+). Functionally, specifically methylates the pseudouridine at position 1915 (m3Psi1915) in 23S rRNA. In Bacillus licheniformis (strain ATCC 14580 / DSM 13 / JCM 2505 / CCUG 7422 / NBRC 12200 / NCIMB 9375 / NCTC 10341 / NRRL NRS-1264 / Gibson 46), this protein is Ribosomal RNA large subunit methyltransferase H.